The sequence spans 164 residues: Shikimate kinase (164 aa).

11 to 16 (GSGKST) is a binding site for ATP. Residue serine 15 coordinates Mg(2+). Residues aspartate 33, arginine 57, and glycine 79 each coordinate substrate. Arginine 117 contacts ATP. Arginine 134 is a substrate binding site.

Belongs to the shikimate kinase family. As to quaternary structure, monomer. The cofactor is Mg(2+).

The protein localises to the cytoplasm. It catalyses the reaction shikimate + ATP = 3-phosphoshikimate + ADP + H(+). It functions in the pathway metabolic intermediate biosynthesis; chorismate biosynthesis; chorismate from D-erythrose 4-phosphate and phosphoenolpyruvate: step 5/7. Catalyzes the specific phosphorylation of the 3-hydroxyl group of shikimic acid using ATP as a cosubstrate. The protein is Shikimate kinase of Persephonella marina (strain DSM 14350 / EX-H1).